Here is a 177-residue protein sequence, read N- to C-terminus: Large ribosomal subunit protein uL6 (177 aa).

The disordered stretch occupies residues 154-177 (PEPYKGKGVRYADEQVRRKEAKKK). Positions 155–171 (EPYKGKGVRYADEQVRR) are enriched in basic and acidic residues.

This sequence belongs to the universal ribosomal protein uL6 family. Part of the 50S ribosomal subunit.

This protein binds to the 23S rRNA, and is important in its secondary structure. It is located near the subunit interface in the base of the L7/L12 stalk, and near the tRNA binding site of the peptidyltransferase center. This chain is Large ribosomal subunit protein uL6, found in Alcanivorax borkumensis (strain ATCC 700651 / DSM 11573 / NCIMB 13689 / SK2).